The primary structure comprises 207 residues: Succinyl-CoA:3-ketoacid coenzyme A transferase subunit B (207 aa).

Residue glutamate 43 is part of the active site.

Belongs to the 3-oxoacid CoA-transferase subunit B family. Heterodimer of a subunit A and a subunit B.

It catalyses the reaction a 3-oxo acid + succinyl-CoA = a 3-oxoacyl-CoA + succinate. This is Succinyl-CoA:3-ketoacid coenzyme A transferase subunit B (scoB) from Helicobacter pylori (strain J99 / ATCC 700824) (Campylobacter pylori J99).